A 139-amino-acid polypeptide reads, in one-letter code: Large-conductance mechanosensitive channel (139 aa).

A run of 2 helical transmembrane segments spans residues 9 to 29 (AFAV…GAAF) and 79 to 99 (IQTV…VKAI).

It belongs to the MscL family. Homopentamer.

The protein resides in the cell inner membrane. In terms of biological role, channel that opens in response to stretch forces in the membrane lipid bilayer. May participate in the regulation of osmotic pressure changes within the cell. In Pseudomonas putida (strain ATCC 700007 / DSM 6899 / JCM 31910 / BCRC 17059 / LMG 24140 / F1), this protein is Large-conductance mechanosensitive channel.